The chain runs to 230 residues: Ribonuclease HII (230 aa).

Residues 21–212 (GPVAGVDEVG…VRRVANGSGG (192 aa)) form the RNase H type-2 domain. 3 residues coordinate a divalent metal cation: Asp27, Glu28, and Asp121.

It belongs to the RNase HII family. Mn(2+) is required as a cofactor. The cofactor is Mg(2+).

Its subcellular location is the cytoplasm. The enzyme catalyses Endonucleolytic cleavage to 5'-phosphomonoester.. Functionally, endonuclease that specifically degrades the RNA of RNA-DNA hybrids. This Mycobacterium avium (strain 104) protein is Ribonuclease HII.